Consider the following 318-residue polypeptide: Homoserine kinase (318 aa).

ATP is bound at residue 97–107 (PIGSGLGSSAC).

The protein belongs to the GHMP kinase family. Homoserine kinase subfamily.

It localises to the cytoplasm. It carries out the reaction L-homoserine + ATP = O-phospho-L-homoserine + ADP + H(+). It participates in amino-acid biosynthesis; L-threonine biosynthesis; L-threonine from L-aspartate: step 4/5. Functionally, catalyzes the ATP-dependent phosphorylation of L-homoserine to L-homoserine phosphate. The chain is Homoserine kinase from Aliivibrio fischeri (strain MJ11) (Vibrio fischeri).